The sequence spans 107 residues: MAHATLSAAPSNPRLLRVALLLLLLVAASRRAAGASVVTELRCQCLQTLQGIHLKNIQSVNVRSPGPHCAQTEVIATLKNGKKACLNPASPMVQKIIEKILNKGSTN.

The signal sequence occupies residues Met-1–Gly-34. Disulfide bonds link Cys-43–Cys-69 and Cys-45–Cys-85.

The protein belongs to the intercrine alpha (chemokine CxC) family. In terms of processing, N-terminal processed form GRO-gamma(5-73) is produced by proteolytic cleavage after secretion from peripheral blood monocytes.

The protein localises to the secreted. Its function is as follows. Ligand for CXCR2. Has chemotactic activity for neutrophils. May play a role in inflammation and exert its effects on endothelial cells in an autocrine fashion. In vitro, the processed form GRO-gamma(5-73) shows a fivefold higher chemotactic activity for neutrophilic granulocytes. The chain is C-X-C motif chemokine 3 (CXCL3) from Homo sapiens (Human).